The sequence spans 250 residues: Ribonuclease PH (250 aa).

Phosphate contacts are provided by residues Arg86 and 124-126 (GTR).

The protein belongs to the RNase PH family. As to quaternary structure, homohexameric ring arranged as a trimer of dimers.

The catalysed reaction is tRNA(n+1) + phosphate = tRNA(n) + a ribonucleoside 5'-diphosphate. In terms of biological role, phosphorolytic 3'-5' exoribonuclease that plays an important role in tRNA 3'-end maturation. Removes nucleotide residues following the 3'-CCA terminus of tRNAs; can also add nucleotides to the ends of RNA molecules by using nucleoside diphosphates as substrates, but this may not be physiologically important. Probably plays a role in initiation of 16S rRNA degradation (leading to ribosome degradation) during starvation. This Exiguobacterium sibiricum (strain DSM 17290 / CCUG 55495 / CIP 109462 / JCM 13490 / 255-15) protein is Ribonuclease PH.